A 113-amino-acid chain; its full sequence is Neocarzinostatin (113 aa).

Disulfide bonds link Cys37/Cys47 and Cys88/Cys93.

It belongs to the neocarzinostatin family.

Functionally, NCS has antibiotic activity (for Gram-positive bacteria) and antitumor activity (for certain mouse tumors). NCS binds non-covalently to a chromophore which is the cytotoxic and mutagenic component of the antibiotic. The chromophore binds to DNA as a weak intercalator and causes single- and double-strand breaks. This Streptomyces malayensis protein is Neocarzinostatin (ncsA).